Consider the following 549-residue polypeptide: Indole-3-acetic acid-amido synthetase GH3.2 (549 aa).

This sequence belongs to the IAA-amido conjugating enzyme family. As to expression, expressed in flowers, pollen, cotyledons, stipules, true leaves, hypocotyls, and all parts of the roots except for the primary root tips.

In terms of biological role, catalyzes the synthesis of indole-3-acetic acid (IAA)-amino acid conjugates, providing a mechanism for the plant to cope with the presence of excess auxin. Strongly reactive with Glu, Gln, Trp, Asp, Ala, Leu, Phe, Gly, Tyr, Met, Ile and Val. Little or no product formation with His, Ser, Thr, Arg, Lys, or Cys. Also active on pyruvic and butyric acid analogs of IAA, PAA and the synthetic auxin naphthaleneacetic acid (NAA). The two chlorinated synthetic auxin herbicides 2,4-D and 3,6-dichloro-o-anisic acid (dicamba) cannot be used as substrates. This Arabidopsis thaliana (Mouse-ear cress) protein is Indole-3-acetic acid-amido synthetase GH3.2 (GH3.2).